The following is a 337-amino-acid chain: 4-hydroxy-2-oxovalerate aldolase (337 aa).

Residues 6-256 (IRIMDTTLRD…ETGIDLFQIM (251 aa)) form the Pyruvate carboxyltransferase domain. A substrate-binding site is contributed by 14–15 (RD). D15 contributes to the Mn(2+) binding site. H18 (proton acceptor) is an active-site residue. The substrate site is built by S168 and H195. Mn(2+) contacts are provided by H195 and H197. Y286 lines the substrate pocket.

This sequence belongs to the 4-hydroxy-2-oxovalerate aldolase family.

It carries out the reaction (S)-4-hydroxy-2-oxopentanoate = acetaldehyde + pyruvate. The protein is 4-hydroxy-2-oxovalerate aldolase (nahM) of Geobacillus genomosp. 3.